Here is a 100-residue protein sequence, read N- to C-terminus: NADH-quinone oxidoreductase subunit K (100 aa).

The next 3 helical transmembrane spans lie at 4–24 (LQHG…GLVI), 28–48 (LLFM…AFVV), and 60–80 (VMYI…LALL).

The protein belongs to the complex I subunit 4L family. In terms of assembly, NDH-1 is composed of 13 different subunits. Subunits NuoA, H, J, K, L, M, N constitute the membrane sector of the complex.

The protein localises to the cell inner membrane. It catalyses the reaction a quinone + NADH + 5 H(+)(in) = a quinol + NAD(+) + 4 H(+)(out). Its function is as follows. NDH-1 shuttles electrons from NADH, via FMN and iron-sulfur (Fe-S) centers, to quinones in the respiratory chain. The immediate electron acceptor for the enzyme in this species is believed to be ubiquinone. Couples the redox reaction to proton translocation (for every two electrons transferred, four hydrogen ions are translocated across the cytoplasmic membrane), and thus conserves the redox energy in a proton gradient. The polypeptide is NADH-quinone oxidoreductase subunit K (Shigella sonnei (strain Ss046)).